An 806-amino-acid polypeptide reads, in one-letter code: Mitogen-activated protein kinase 7 (806 aa).

Residues 1-23 (MAEPLKEEDGEDGSGEPPGRVKA) are disordered. Alanine 2 carries the post-translational modification N-acetylalanine. Positions 2 to 77 (AEPLKEEDGE…VVSSARRRLT (76 aa)) are required for cytoplasmic targeting. The Protein kinase domain occupies 55–347 (YEIIETIGNG…AAAALRHPFL (293 aa)). Residues 61 to 69 (IGNGAYGVV) and lysine 84 contribute to the ATP site. Residues 78–139 (GQQVAIKKIP…FRSVYVVLDL (62 aa)) are required for binding to MAP2K5. Residues 140–406 (MESDLHQIIH…QQIRFQPSLQ (267 aa)) form a necessary for oligomerization region. Residue aspartate 182 is the Proton acceptor of the active site. A TXY motif is present at residues 219-221 (TEY). Positions 407–806 (PVASEPVCPD…LSDLPDLQEP (400 aa)) are may not be required for kinase activity; required to stimulate MEF2C activity. 2 disordered regions span residues 424 to 475 (APSG…SDNT) and 488 to 727 (RSRL…PKGS). A compositionally biased stretch (pro residues) spans 433-443 (SPPPALPPCSG). Basic and acidic residues-rich tracts occupy residues 502 to 519 (PEPRKPVTAQERQREREE), 527 to 544 (RAKEREKRRQERERKERG), and 563 to 573 (DNDRSLLERWT). Positions 505–539 (RKPVTAQERQREREEKRRRRQERAKEREKRRQERE) match the Nuclear localization signal motif. Composition is skewed to pro residues over residues 578–592 (PPVPAPAPAPAPTPK) and 627–643 (VCPPPGPVPQPAGPVPA). Residues 647–660 (TAPSTSLLASQSLV) are compositionally biased toward polar residues. Positions 678–689 (PSGPPPPDPGLT) are enriched in pro residues. Residues 693–710 (STSESPDVNLVTQQLSKS) show a composition bias toward polar residues. At serine 710 the chain carries Phosphoserine. Position 723 is a phosphothreonine (threonine 723).

This sequence belongs to the protein kinase superfamily. CMGC Ser/Thr protein kinase family. MAP kinase subfamily. In terms of assembly, interacts with MAP2K5. Forms oligomers. Interacts with MEF2A, MEF2C and MEF2D; the interaction phosphorylates the MEF2s and enhances transcriptional activity of MEF2A, MEF2C but not MEF2D. Interacts with SGK1. Interacts with PML. Interacts (via N-terminal half) with HSP90AB1-CDC37 chaperone complex in resting cells; the interaction is MAP2K5-independent and prevents MAPK7 from ubiquitination and proteasomal degradation. Interacts with STUB1/CHIP; the interaction is enhanced in the presence of IGF1 or MAP2K5 and promotes STUB1/CHIP E3 ligase activity. It depends on Mg(2+) as a cofactor. Dually phosphorylated on Thr-219 and Tyr-221, which activates the enzyme.

The protein resides in the cytoplasm. Its subcellular location is the nucleus. It localises to the PML body. It carries out the reaction L-seryl-[protein] + ATP = O-phospho-L-seryl-[protein] + ADP + H(+). The enzyme catalyses L-threonyl-[protein] + ATP = O-phospho-L-threonyl-[protein] + ADP + H(+). With respect to regulation, activated by tyrosine and threonine phosphorylation. Activated in response to hyperosmolarity, hydrogen peroxide, and epidermal growth factor (EGF). Functionally, plays a role in various cellular processes such as proliferation, differentiation and cell survival. The upstream activator of MAPK7 is the MAPK kinase MAP2K5. Upon activation, it translocates to the nucleus and phosphorylates various downstream targets including MEF2C. EGF activates MAPK7 through a Ras-independent and MAP2K5-dependent pathway. As part of the MAPK/ERK signaling pathway, acts as a negative regulator of apoptosis in cardiomyocytes via interaction with STUB1/CHIP and promotion of STUB1-mediated ubiquitination and degradation of ICER-type isoforms of CREM. May have a role in muscle cell differentiation. May be important for endothelial function and maintenance of blood vessel integrity. MAP2K5 and MAPK7 interact specifically with one another and not with MEK1/ERK1 or MEK2/ERK2 pathways. Phosphorylates SGK1 at Ser-78 and this is required for growth factor-induced cell cycle progression. Involved in the regulation of p53/TP53 by disrupting the PML-MDM2 interaction. This chain is Mitogen-activated protein kinase 7 (Mapk7), found in Rattus norvegicus (Rat).